The chain runs to 430 residues: Lipoyl synthase, mitochondrial (430 aa).

The N-terminal 29 residues, 1-29 (MASPVPIQRLQAPLRRSLARAAALSTRSY), are a transit peptide targeting the mitochondrion. Over residues 28–58 (SYATIPSGPSSQPTSQESSSAASASAPATKP) the composition is skewed to low complexity. The segment at 28–62 (SYATIPSGPSSQPTSQESSSAASASAPATKPRPTY) is disordered. Positions 142, 147, 153, 173, 177, 180, and 390 each coordinate [4Fe-4S] cluster. Positions 156–379 (GSNKAAATAT…RQRALDMGFL (224 aa)) constitute a Radical SAM core domain.

It belongs to the radical SAM superfamily. Lipoyl synthase family. [4Fe-4S] cluster is required as a cofactor.

The protein resides in the mitochondrion. The catalysed reaction is [[Fe-S] cluster scaffold protein carrying a second [4Fe-4S](2+) cluster] + N(6)-octanoyl-L-lysyl-[protein] + 2 oxidized [2Fe-2S]-[ferredoxin] + 2 S-adenosyl-L-methionine + 4 H(+) = [[Fe-S] cluster scaffold protein] + N(6)-[(R)-dihydrolipoyl]-L-lysyl-[protein] + 4 Fe(3+) + 2 hydrogen sulfide + 2 5'-deoxyadenosine + 2 L-methionine + 2 reduced [2Fe-2S]-[ferredoxin]. It functions in the pathway protein modification; protein lipoylation via endogenous pathway; protein N(6)-(lipoyl)lysine from octanoyl-[acyl-carrier-protein]: step 2/2. Its function is as follows. Catalyzes the radical-mediated insertion of two sulfur atoms into the C-6 and C-8 positions of the octanoyl moiety bound to the lipoyl domains of lipoate-dependent enzymes, thereby converting the octanoylated domains into lipoylated derivatives. This is Lipoyl synthase, mitochondrial from Neurospora crassa (strain ATCC 24698 / 74-OR23-1A / CBS 708.71 / DSM 1257 / FGSC 987).